Consider the following 273-residue polypeptide: Putative pyruvate, phosphate dikinase regulatory protein (273 aa).

149–156 (GPSRTSKT) is a binding site for ADP.

This sequence belongs to the pyruvate, phosphate/water dikinase regulatory protein family. PDRP subfamily.

The catalysed reaction is N(tele)-phospho-L-histidyl/L-threonyl-[pyruvate, phosphate dikinase] + ADP = N(tele)-phospho-L-histidyl/O-phospho-L-threonyl-[pyruvate, phosphate dikinase] + AMP + H(+). It carries out the reaction N(tele)-phospho-L-histidyl/O-phospho-L-threonyl-[pyruvate, phosphate dikinase] + phosphate + H(+) = N(tele)-phospho-L-histidyl/L-threonyl-[pyruvate, phosphate dikinase] + diphosphate. Bifunctional serine/threonine kinase and phosphorylase involved in the regulation of the pyruvate, phosphate dikinase (PPDK) by catalyzing its phosphorylation/dephosphorylation. This is Putative pyruvate, phosphate dikinase regulatory protein from Rickettsia bellii (strain RML369-C).